The following is a 228-amino-acid chain: Large ribosomal subunit protein bL25 (228 aa).

A compositionally biased stretch (polar residues) spans 1-10 (MNSLDANTRN). Disordered regions lie at residues 1-20 (MNSLDANTRNTKSKGDVRSL) and 187-228 (MKEP…EEKK). The segment covering 202 to 228 (EDGKEAAPAAEGDKKDDGEKKATEEKK) has biased composition (basic and acidic residues).

It belongs to the bacterial ribosomal protein bL25 family. CTC subfamily. In terms of assembly, part of the 50S ribosomal subunit; part of the 5S rRNA/L5/L18/L25 subcomplex. Contacts the 5S rRNA. Binds to the 5S rRNA independently of L5 and L18.

Functionally, this is one of the proteins that binds to the 5S RNA in the ribosome where it forms part of the central protuberance. In Pelagibacter ubique (strain HTCC1062), this protein is Large ribosomal subunit protein bL25.